A 120-amino-acid polypeptide reads, in one-letter code: Large ribosomal subunit protein uL24 (120 aa).

The segment at 1–26 (MSKQPDKQRKSQRRAPLHERHKQVRA) is disordered. Basic residues predominate over residues 10–24 (KSQRRAPLHERHKQV).

This sequence belongs to the universal ribosomal protein uL24 family. As to quaternary structure, part of the 50S ribosomal subunit. Interacts weakly with protein L4.

In terms of biological role, one of two assembly initiator proteins, it binds directly to the 5'-end of the 23S rRNA, where it nucleates assembly of the 50S subunit. Functionally, stabilizes the tertiary rRNA structure within the 23S rRNA domain (domain I) to which it binds. Located at the polypeptide exit tunnel on the outside of the subunit. The polypeptide is Large ribosomal subunit protein uL24 (rpl24) (Haloarcula marismortui (strain ATCC 43049 / DSM 3752 / JCM 8966 / VKM B-1809) (Halobacterium marismortui)).